The primary structure comprises 149 residues: Putative pre-16S rRNA nuclease (149 aa).

This sequence belongs to the YqgF nuclease family.

It localises to the cytoplasm. Its function is as follows. Could be a nuclease involved in processing of the 5'-end of pre-16S rRNA. The chain is Putative pre-16S rRNA nuclease from Burkholderia multivorans (strain ATCC 17616 / 249).